The following is a 227-amino-acid chain: MTQQGDAVAGELATEKVGIKGYLAFFLTIIFFSGVFSGTDSWWRVFDFSVLNGSFGQLPGANGATTSFRGAGGAGAKDGFLFALELAPSVILSLGIISITDGLGGLRAAQQLMTPVLKPLLGIPGICSLALIANLQNTDAAAGMTKELAQEGEITERDKVIFAAYQTSGSAIITNYFSSGVAVFAFLGTSVIVPLAVILVFKFVGANILRVWLNFEERRNPTQGAQA.

Helical transmembrane passes span 17-37 (VGIK…GVFS), 79-99 (GFLF…IISI), 112-132 (LMTP…LALI), and 181-201 (VAVF…ILVF).

The protein localises to the cell membrane. This is an uncharacterized protein from Escherichia coli (strain K12).